The sequence spans 85 residues: Defensin-like protein 112 (85 aa).

Positions 1–24 are cleaved as a signal peptide; the sequence is MAISKKMLTTFVLTILLAVSFVHC. 4 cysteine pairs are disulfide-bonded: cysteine 40/cysteine 80, cysteine 46/cysteine 71, cysteine 56/cysteine 78, and cysteine 60/cysteine 79.

Belongs to the DEFL family.

The protein localises to the secreted. In Arabidopsis thaliana (Mouse-ear cress), this protein is Defensin-like protein 112.